We begin with the raw amino-acid sequence, 109 residues long: Hainantoxin-XVIII.2 (109 aa).

The first 18 residues, 1–18, serve as a signal peptide directing secretion; the sequence is MKLSIIIIVTSLVIAVVA. A propeptide spanning residues 19 to 46 is cleaved from the precursor; sequence FPSKDSKAIENDKTEQRMEIVVQETARA. 4 disulfide bridges follow: Cys-47–Cys-62, Cys-55–Cys-68, Cys-59–Cys-108, and Cys-61–Cys-81.

This sequence belongs to the neurotoxin 25 family. F7 subfamily. As to expression, expressed by the venom gland.

It is found in the secreted. Putative ion channel inhibitor. This Cyriopagopus hainanus (Chinese bird spider) protein is Hainantoxin-XVIII.2.